A 428-amino-acid polypeptide reads, in one-letter code: Elongation factor 1-alpha (428 aa).

Residues 5-225 (KPILNVAFIG…DAFQPPEKPT (221 aa)) enclose the tr-type G domain. Residues 14 to 21 (GHVDAGKS) form a G1 region. 14–21 (GHVDAGKS) is a binding site for GTP. S21 contacts Mg(2+). The G2 stretch occupies residues 70–74 (GVTID). Residues 91–94 (DCPG) are G3. GTP is bound by residues 91-95 (DCPGH) and 149-152 (NKMD). The tract at residues 149–152 (NKMD) is G4. Residues 189-191 (ASL) are G5.

Belongs to the TRAFAC class translation factor GTPase superfamily. Classic translation factor GTPase family. EF-Tu/EF-1A subfamily.

Its subcellular location is the cytoplasm. The enzyme catalyses GTP + H2O = GDP + phosphate + H(+). Functionally, GTP hydrolase that promotes the GTP-dependent binding of aminoacyl-tRNA to the A-site of ribosomes during protein biosynthesis. The sequence is that of Elongation factor 1-alpha from Methanococcus maripaludis (strain C7 / ATCC BAA-1331).